Consider the following 514-residue polypeptide: Cilia- and flagella-associated protein 53 (514 aa).

Residues 207–429 adopt a coiled-coil conformation; the sequence is EDRLAKERRE…ERINEGLKEL (223 aa).

Belongs to the CFAP53 family. In terms of assembly, microtubule inner protein component of sperm flagellar doublet microtubules. Interacts with PIERCE1 and PIERCE2; the interactions link outer dynein arms docking complex (ODA-DC) to the internal microtubule inner proteins (MIP) in cilium axoneme. Interacts with CCDC38. Interacts with CCDC42 and IFT88. Interacts with centriolar satellite proteins PIBF1/CEP90 and PCM1. Interacts with dyneins DNAIC1, DNAIC2 AND DNAH11 and with ODA-DC component ODAD4/TTC25. In terms of tissue distribution, expressed in trachea multiciliated cells.

The protein resides in the cytoplasm. The protein localises to the cytoskeleton. Its subcellular location is the cilium axoneme. It localises to the flagellum axoneme. It is found in the microtubule organizing center. The protein resides in the centrosome. The protein localises to the centriolar satellite. Its subcellular location is the spindle pole. Microtubule inner protein (MIP) part of the dynein-decorated doublet microtubules (DMTs) in cilia axoneme, which is required for motile cilia beating. Regulates motility patterns of both 9+0 and 9+2 motile cilia through differential localization and recruitment of axonemal dynein components. Required for centriolar satellite integrity and non-motile cilium assembly. Required for motile cilium formation. Through its role in beating of primary cilia, involved in the establishment of organ laterality during embryogenesis. Required for sperm flagellum biogenesis and is essential for male fertility. In Bos taurus (Bovine), this protein is Cilia- and flagella-associated protein 53 (CFAP53).